A 300-amino-acid polypeptide reads, in one-letter code: MLDSLLAIGGLVLLRDSVEWEGRSLLKALIKKSALRGEQVHVLGCEVSEEEFREGFDSDVNSRLVYHDLFRDPLNWSKPGEAVPEGPLKALRSMCKRTDHGSVTIALDSLSWLLCHIPCVTLCQALHALSQQNGDPGDNSLVEQVRVLGLLHEELHGPGSMGALNTLAHTEVTLSGKVDQTSASILCRRPQQRATYQTWWFSVLPDFSLTLHEGLPLRSELHPDHHTTQVDPTAHLTFNLHLSKKEREARDSLTLPFQFSSEKQKALLHPVPSRTTGHIFYEPDAFDDVDPEDPDDDLDI.

Serine 252 bears the Phosphoserine mark. The interval 279-300 is disordered; it reads IFYEPDAFDDVDPEDPDDDLDI. A compositionally biased stretch (acidic residues) spans 284 to 300; that stretch reads DAFDDVDPEDPDDDLDI.

This sequence belongs to the ELP5 family. In terms of assembly, component of the elongator complex which consists of ELP1, ELP2, ELP3, ELP4, ELP5 and ELP6; in the complex, is required for optimal binding of ELP3 to ELP4. In terms of processing, tyrosine-phosphorylated. Widely expressed with highest levels in testis. Expressed throughout the cerebellum.

It localises to the nucleus. It is found in the cytoplasm. It functions in the pathway tRNA modification; 5-methoxycarbonylmethyl-2-thiouridine-tRNA biosynthesis. Functionally, component of the elongator complex which is required for multiple tRNA modifications, including mcm5U (5-methoxycarbonylmethyl uridine), mcm5s2U (5-methoxycarbonylmethyl-2-thiouridine), and ncm5U (5-carbamoylmethyl uridine). The elongator complex catalyzes the formation of carboxymethyluridine in the wobble base at position 34 in tRNAs. Involved in cell migration. The polypeptide is Elongator complex protein 5 (Elp5) (Mus musculus (Mouse)).